We begin with the raw amino-acid sequence, 386 residues long: Putative 8-amino-7-oxononanoate synthase 2 (386 aa).

Residue R21 participates in substrate binding. Pyridoxal 5'-phosphate is bound at residue G104–Y105. Residue H129 coordinates substrate. Pyridoxal 5'-phosphate is bound by residues S176, D201 to H204, and T230 to K233. K233 is modified (N6-(pyridoxal phosphate)lysine).

This sequence belongs to the class-II pyridoxal-phosphate-dependent aminotransferase family. BioF subfamily. As to quaternary structure, homodimer. Requires pyridoxal 5'-phosphate as cofactor.

It catalyses the reaction 6-carboxyhexanoyl-[ACP] + L-alanine + H(+) = (8S)-8-amino-7-oxononanoate + holo-[ACP] + CO2. Its pathway is cofactor biosynthesis; biotin biosynthesis. In terms of biological role, catalyzes the decarboxylative condensation of pimeloyl-[acyl-carrier protein] and L-alanine to produce 8-amino-7-oxononanoate (AON), [acyl-carrier protein], and carbon dioxide. This chain is Putative 8-amino-7-oxononanoate synthase 2 (bioF), found in Bacillus velezensis (strain DSM 23117 / BGSC 10A6 / LMG 26770 / FZB42) (Bacillus amyloliquefaciens subsp. plantarum).